The chain runs to 123 residues: Protein Wnt-7a (123 aa).

S1 carries the O-palmitoleoyl serine; by PORCN lipid modification. Positions 33-61 (VEPVRTHRNKRPVFLKIKKPLSYRKPMVT) are disordered linker. An intrachain disulfide couples C89 to C104. N-linked (GlcNAc...) asparagine glycosylation is found at N90 and N96.

Belongs to the Wnt family. Forms a soluble 1:1 complex with AFM; this prevents oligomerization and is required for prolonged biological activity. The complex with AFM may represent the physiological form in body fluids. Interacts with FZD5. Interacts with PORCN. Post-translationally, palmitoleoylation is required for efficient binding to frizzled receptors. Depalmitoleoylation leads to Wnt signaling pathway inhibition.

It localises to the secreted. Its subcellular location is the extracellular space. The protein resides in the extracellular matrix. In terms of biological role, ligand for members of the frizzled family of seven transmembrane receptors that functions in the canonical Wnt/beta-catenin signaling pathway. Plays an important role in embryonic development, including dorsal versus ventral patterning during limb development, skeleton development and urogenital tract development. Required for central nervous system (CNS) angiogenesis and blood-brain barrier regulation. This is Protein Wnt-7a (WNT-7A) from Alopias vulpinus (Common thresher shark).